The primary structure comprises 178 residues: FXYD domain-containing ion transport regulator 5 (178 aa).

Positions 1–21 (MSPPSQLCLLTIVALILPSEG) are cleaved as a signal peptide. The interval 21 to 126 (GQTPEKPRSS…YMPPSYIENP (106 aa)) is disordered. Over 22–146 (QTPEKPRSSF…YDNTTLRKRG (125 aa)) the chain is Extracellular. The segment covering 29-58 (SSFTAHQSSVTTHVPVPDQTSPGVQTTPPI) has biased composition (polar residues). Positions 70 to 79 (QTAAKTKTQQ) are enriched in low complexity. The helical transmembrane segment at 147-164 (LLVAAVLFITGIIILTSG) threads the bilayer. Topologically, residues 165–178 (KCRQFSQLCLNRHR) are cytoplasmic.

This sequence belongs to the FXYD family. Regulatory subunit of the sodium/potassium-transporting ATPase which is composed of a catalytic alpha subunit, a non-catalytic beta subunit and an additional regulatory subunit. The regulatory subunit, a member of the FXYD protein family, modulates the enzymatic activity in a tissue- and isoform-specific way by changing affinities of the Na+/K+-ATPase toward Na(+), K(+) or ATP. In terms of processing, glycosylated. As to expression, spleen, lung, skeletal muscle, and testis.

The protein localises to the cell membrane. Its subcellular location is the basolateral cell membrane. In terms of biological role, associates with and regulates the activity of the sodium/potassium-transporting ATPase (NKA) which catalyzes the hydrolysis of ATP coupled with the exchange of Na(+) and K(+) ions across the plasma membrane. May increase NKA activity by increasing the apparent affinity for Na(+). Involved in down-regulation of E-cadherin which results in reduced cell adhesion. Promotes metastasis. This chain is FXYD domain-containing ion transport regulator 5 (Fxyd5), found in Rattus norvegicus (Rat).